A 322-amino-acid chain; its full sequence is Corticotropin-releasing factor-binding protein (322 aa).

The signal sequence occupies residues 1–24; sequence MSPNFKLQCHFILIFLTALRGESR. 5 cysteine pairs are disulfide-bonded: Cys60-Cys81, Cys104-Cys141, Cys183-Cys205, Cys237-Cys264, and Cys277-Cys318. N-linked (GlcNAc...) asparagine glycosylation is present at Asn204.

It belongs to the CRF-binding protein family.

The protein localises to the secreted. Functionally, binds CRF and inactivates it. May prevent inappropriate pituitary-adrenal stimulation in pregnancy. The polypeptide is Corticotropin-releasing factor-binding protein (CRHBP) (Homo sapiens (Human)).